Reading from the N-terminus, the 419-residue chain is Pyrophosphate--fructose 6-phosphate 1-phosphotransferase (419 aa).

Residue Gly-12 coordinates diphosphate. Asp-107 contributes to the Mg(2+) binding site. Substrate-binding positions include 132-134 (TID), 178-180 (MGR), Glu-238, and 300-303 (YELR). Asp-134 functions as the Proton acceptor in the catalytic mechanism.

This sequence belongs to the phosphofructokinase type A (PFKA) family. PPi-dependent PFK group II subfamily. Clade 'Short' sub-subfamily. As to quaternary structure, homodimer. The cofactor is Mg(2+). It depends on Co(2+) as a cofactor. Requires Mn(2+) as cofactor. Ni(2+) serves as cofactor.

Its subcellular location is the cytoplasm. The catalysed reaction is beta-D-fructose 6-phosphate + diphosphate = beta-D-fructose 1,6-bisphosphate + phosphate + H(+). It functions in the pathway carbohydrate degradation; glycolysis; D-glyceraldehyde 3-phosphate and glycerone phosphate from D-glucose: step 3/4. Non-allosteric. In terms of biological role, catalyzes the phosphorylation of D-fructose 6-phosphate, the first committing step of glycolysis. Uses inorganic phosphate (PPi) as phosphoryl donor instead of ATP like common ATP-dependent phosphofructokinases (ATP-PFKs), which renders the reaction reversible, and can thus function both in glycolysis and gluconeogenesis. Consistently, PPi-PFK can replace the enzymes of both the forward (ATP-PFK) and reverse (fructose-bisphosphatase (FBPase)) reactions. This chain is Pyrophosphate--fructose 6-phosphate 1-phosphotransferase, found in Thermotoga maritima (strain ATCC 43589 / DSM 3109 / JCM 10099 / NBRC 100826 / MSB8).